Consider the following 238-residue polypeptide: Ephrin-A3 (238 aa).

A signal peptide spans Met1–Ala22. The Ephrin RBD domain occupies Gly30–Ser169. Asn38, Asn67, and Asn100 each carry an N-linked (GlcNAc...) asparagine glycan. Intrachain disulfides connect Cys63–Cys110 and Cys99–Cys158. A lipid anchor (GPI-anchor amidated glycine) is attached at Gly214. A propeptide spans Thr215–Ser238 (removed in mature form).

It belongs to the ephrin family. Interacts with EPHA8; activates EPHA8. As to expression, expressed in brain, skeletal muscle, spleen, thymus, prostate, testis, ovary, small intestine, and peripheral blood leukocytes.

The protein localises to the cell membrane. In terms of biological role, cell surface GPI-bound ligand for Eph receptors, a family of receptor tyrosine kinases which are crucial for migration, repulsion and adhesion during neuronal, vascular and epithelial development. Binds promiscuously Eph receptors residing on adjacent cells, leading to contact-dependent bidirectional signaling into neighboring cells. The signaling pathway downstream of the receptor is referred to as forward signaling while the signaling pathway downstream of the ephrin ligand is referred to as reverse signaling. The polypeptide is Ephrin-A3 (EFNA3) (Homo sapiens (Human)).